Reading from the N-terminus, the 99-residue chain is Signal recognition particle 19 kDa protein (99 aa).

This sequence belongs to the SRP19 family. As to quaternary structure, part of the signal recognition particle protein translocation system, which is composed of SRP and FtsY. Archaeal SRP consists of a 7S RNA molecule of 300 nucleotides and two protein subunits: SRP54 and SRP19.

The protein resides in the cytoplasm. Involved in targeting and insertion of nascent membrane proteins into the cytoplasmic membrane. Binds directly to 7S RNA and mediates binding of the 54 kDa subunit of the SRP. The chain is Signal recognition particle 19 kDa protein from Ignicoccus hospitalis (strain KIN4/I / DSM 18386 / JCM 14125).